We begin with the raw amino-acid sequence, 209 residues long: Adenylate kinase (209 aa).

10–15 (GAGKGT) contributes to the ATP binding site. Residues 30–59 (STGDLFRAAIKEQTDLGKKVKAVIDSGALV) form an NMP region. AMP contacts are provided by residues Thr31, Arg36, 57–59 (ALV), 85–88 (GFPR), and Gln92. The interval 121–158 (GRRVCSSCGQSFHIEFVKPKKEGICDSCSGDLMIRPDD) is LID. Position 122 (Arg122) interacts with ATP. Cys125 and Cys128 together coordinate Zn(2+). 131-132 (SF) lines the ATP pocket. Residues Cys145 and Cys148 each coordinate Zn(2+). The AMP site is built by Arg155 and Arg166. Pro194 is a binding site for ATP.

The protein belongs to the adenylate kinase family. Monomer.

The protein resides in the cytoplasm. The catalysed reaction is AMP + ATP = 2 ADP. The protein operates within purine metabolism; AMP biosynthesis via salvage pathway; AMP from ADP: step 1/1. Its function is as follows. Catalyzes the reversible transfer of the terminal phosphate group between ATP and AMP. Plays an important role in cellular energy homeostasis and in adenine nucleotide metabolism. The polypeptide is Adenylate kinase (Treponema denticola (strain ATCC 35405 / DSM 14222 / CIP 103919 / JCM 8153 / KCTC 15104)).